A 623-amino-acid polypeptide reads, in one-letter code: MPHSDELDSRDVLSVSGLNIAFHHEGQQVDAVRNVSLRLKRGETLAIVGESGSGKSVTALALMRLIEQSGANVRCGEMLLRRRNRQVIELSEQSDAQMRRVRGADIAMIFQEPMTSLNPVFTVGEQIAESIRLHQGASHEEALAEAKRMLDQVRIPESQAILSRYPHQLSGGMRQRVMIAMALSCRPAVLIADEPTTALDVTIQAQILQLIKVLQQEMSMGVIFITHDMGVVADIADRVLVMYQGEAVETGSVEQIFHAPTHPYTQTLLAAVPQLGAMRGHSLPRRFPLISADEPALYESQIEQDTVVEGEPILQVRGLVTRFPLRSGLFNRVTREVHAVENISFDLWPGETLSLVGESGSGKSTTGRALLRLVESRQGEIIFNGQRIDTLSAGKLQPLRRDIQCIFQDPYASLDPRQTVGYSIMEPLRIHGLGQGDAAAKRVAWLLERVGLRPEHAWRYPHEFSGGQRQRICIARALALNPKVIIADEAVSALDVSVRGQIINLLLDLQREMGIAYLFISHDMAVVERISHRVAVMYLGQIVEMGPRRAVFENPQHPYTRKLMAAVPVADPSRHRPRRVLLSDDIPSNIHKRGEETPAVSLQLVGPGHYVARPLQDNALSRL.

ABC transporter domains follow at residues 15–269 (VSGL…QTLL) and 325–564 (LRSG…RKLM). ATP is bound by residues 49–56 (GESGSGKS) and 357–364 (GESGSGKS).

It belongs to the ABC transporter superfamily. Glutathione importer (TC 3.A.1.5.11) family. As to quaternary structure, the complex is composed of two ATP-binding proteins (GsiA), two transmembrane proteins (GsiC and GsiD) and a solute-binding protein (GsiB).

The protein resides in the cell inner membrane. It carries out the reaction glutathione(out) + ATP + H2O = glutathione(in) + ADP + phosphate + H(+). Part of the ABC transporter complex GsiABCD involved in glutathione import. Responsible for energy coupling to the transport system. This chain is Glutathione import ATP-binding protein GsiA, found in Salmonella typhimurium (strain LT2 / SGSC1412 / ATCC 700720).